Reading from the N-terminus, the 453-residue chain is Ribosomal protein uS12 methylthiotransferase RimO (453 aa).

One can recognise an MTTase N-terminal domain in the interval 6–116; sequence PKVGFVSLGC…VMEAVHEALP (111 aa). Residues Cys-15, Cys-51, Cys-80, Cys-147, Cys-151, and Cys-154 each contribute to the [4Fe-4S] cluster site. Positions 133–370 constitute a Radical SAM core domain; it reads LTPRHYAYLK…MEKQAQISAA (238 aa). The region spanning 373 to 441 is the TRAM domain; sequence EAKIGTVQQC…DHDLYGDALP (69 aa).

The protein belongs to the methylthiotransferase family. RimO subfamily. It depends on [4Fe-4S] cluster as a cofactor.

It is found in the cytoplasm. The enzyme catalyses L-aspartate(89)-[ribosomal protein uS12]-hydrogen + (sulfur carrier)-SH + AH2 + 2 S-adenosyl-L-methionine = 3-methylsulfanyl-L-aspartate(89)-[ribosomal protein uS12]-hydrogen + (sulfur carrier)-H + 5'-deoxyadenosine + L-methionine + A + S-adenosyl-L-homocysteine + 2 H(+). Catalyzes the methylthiolation of an aspartic acid residue of ribosomal protein uS12. This Stenotrophomonas maltophilia (strain R551-3) protein is Ribosomal protein uS12 methylthiotransferase RimO.